Reading from the N-terminus, the 203-residue chain is Guanylate kinase (203 aa).

Residues 5-183 (GVLYIISAPS…AVEELKSVVV (179 aa)) enclose the Guanylate kinase-like domain. 12 to 19 (APSGAGKT) is an ATP binding site.

It belongs to the guanylate kinase family.

The protein resides in the cytoplasm. The enzyme catalyses GMP + ATP = GDP + ADP. Essential for recycling GMP and indirectly, cGMP. This chain is Guanylate kinase, found in Geobacter metallireducens (strain ATCC 53774 / DSM 7210 / GS-15).